The sequence spans 209 residues: Uracil phosphoribosyltransferase (209 aa).

Residues R79, R104, and 131–139 each bind 5-phospho-alpha-D-ribose 1-diphosphate; that span reads DPMLATGGS. Residues I194 and 199–201 each bind uracil; that span reads GDA. D200 contributes to the 5-phospho-alpha-D-ribose 1-diphosphate binding site.

It belongs to the UPRTase family. Requires Mg(2+) as cofactor.

It carries out the reaction UMP + diphosphate = 5-phospho-alpha-D-ribose 1-diphosphate + uracil. It participates in pyrimidine metabolism; UMP biosynthesis via salvage pathway; UMP from uracil: step 1/1. Its activity is regulated as follows. Allosterically activated by GTP. Catalyzes the conversion of uracil and 5-phospho-alpha-D-ribose 1-diphosphate (PRPP) to UMP and diphosphate. This chain is Uracil phosphoribosyltransferase, found in Streptococcus pneumoniae (strain ATCC BAA-255 / R6).